The following is a 154-amino-acid chain: NADPH-dependent 7-cyano-7-deazaguanine reductase (154 aa).

The segment covering 1 to 13 has biased composition (polar residues); that stretch reads MSKTDVSGLSQLG. The disordered stretch occupies residues 1 to 24; sequence MSKTDVSGLSQLGRQVDAPTSPET. Cysteine 52 acts as the Thioimide intermediate in catalysis. The Proton donor role is filled by aspartate 59. Substrate is bound by residues 74 to 76 and 93 to 94; these read VES and HE.

The protein belongs to the GTP cyclohydrolase I family. QueF type 1 subfamily.

The protein localises to the cytoplasm. The enzyme catalyses 7-aminomethyl-7-carbaguanine + 2 NADP(+) = 7-cyano-7-deazaguanine + 2 NADPH + 3 H(+). It functions in the pathway tRNA modification; tRNA-queuosine biosynthesis. Catalyzes the NADPH-dependent reduction of 7-cyano-7-deazaguanine (preQ0) to 7-aminomethyl-7-deazaguanine (preQ1). This Allorhizobium ampelinum (strain ATCC BAA-846 / DSM 112012 / S4) (Agrobacterium vitis (strain S4)) protein is NADPH-dependent 7-cyano-7-deazaguanine reductase.